The chain runs to 170 residues: Endoribonuclease YbeY (170 aa).

Zn(2+)-binding residues include His-128, His-132, and His-138.

Belongs to the endoribonuclease YbeY family. Zn(2+) serves as cofactor.

It is found in the cytoplasm. Single strand-specific metallo-endoribonuclease involved in late-stage 70S ribosome quality control and in maturation of the 3' terminus of the 16S rRNA. In Ruegeria sp. (strain TM1040) (Silicibacter sp.), this protein is Endoribonuclease YbeY.